The chain runs to 288 residues: Quinate/shikimate dehydrogenase (288 aa).

Residues K71 and D107 each coordinate substrate. Residues 132–135 (AGGA), 155–158 (NRRD), K205, 232–235 (CVYN), and G255 contribute to the NAD(+) site.

The protein belongs to the shikimate dehydrogenase family. As to quaternary structure, homodimer.

It carries out the reaction L-quinate + NAD(+) = 3-dehydroquinate + NADH + H(+). The enzyme catalyses L-quinate + NADP(+) = 3-dehydroquinate + NADPH + H(+). The catalysed reaction is shikimate + NADP(+) = 3-dehydroshikimate + NADPH + H(+). It catalyses the reaction shikimate + NAD(+) = 3-dehydroshikimate + NADH + H(+). Its pathway is metabolic intermediate biosynthesis; chorismate biosynthesis; chorismate from D-erythrose 4-phosphate and phosphoenolpyruvate: step 4/7. In terms of biological role, the actual biological function of YdiB remains unclear, nor is it known whether 3-dehydroshikimate or quinate represents the natural substrate. Catalyzes the reversible NAD-dependent reduction of both 3-dehydroshikimate (DHSA) and 3-dehydroquinate to yield shikimate (SA) and quinate, respectively. It can use both NAD or NADP for catalysis, however it has higher catalytic efficiency with NAD. This chain is Quinate/shikimate dehydrogenase, found in Escherichia coli (strain 55989 / EAEC).